Consider the following 129-residue polypeptide: Small ribosomal subunit protein uS11 (129 aa).

Belongs to the universal ribosomal protein uS11 family. As to quaternary structure, part of the 30S ribosomal subunit. Interacts with proteins S7 and S18. Binds to IF-3.

Functionally, located on the platform of the 30S subunit, it bridges several disparate RNA helices of the 16S rRNA. Forms part of the Shine-Dalgarno cleft in the 70S ribosome. This chain is Small ribosomal subunit protein uS11, found in Actinobacillus succinogenes (strain ATCC 55618 / DSM 22257 / CCUG 43843 / 130Z).